Consider the following 124-residue polypeptide: MSVPTDRSYTAEHEWVLVDGSVATVGITEFAAEALGDVVFVQLPDVGAQLTAGEACGEIESTKSVSDLFAPVTGSVIEVNSAIDAGPETVNSDPYGAGWLFRVEIATAGELLDAAAYAALTSGE.

The Lipoyl-binding domain occupies 22-104 (VATVGITEFA…YGAGWLFRVE (83 aa)). K63 carries the N6-lipoyllysine modification.

Belongs to the GcvH family. The glycine cleavage system is composed of four proteins: P, T, L and H. The cofactor is (R)-lipoate.

In terms of biological role, the glycine cleavage system catalyzes the degradation of glycine. The H protein shuttles the methylamine group of glycine from the P protein to the T protein. This Beutenbergia cavernae (strain ATCC BAA-8 / DSM 12333 / CCUG 43141 / JCM 11478 / NBRC 16432 / NCIMB 13614 / HKI 0122) protein is Glycine cleavage system H protein.